A 202-amino-acid polypeptide reads, in one-letter code: Protein GrpE 1 (202 aa).

This sequence belongs to the GrpE family. Homodimer.

Its subcellular location is the cytoplasm. In terms of biological role, participates actively in the response to hyperosmotic and heat shock by preventing the aggregation of stress-denatured proteins, in association with DnaK and GrpE. It is the nucleotide exchange factor for DnaK and may function as a thermosensor. Unfolded proteins bind initially to DnaJ; upon interaction with the DnaJ-bound protein, DnaK hydrolyzes its bound ATP, resulting in the formation of a stable complex. GrpE releases ADP from DnaK; ATP binding to DnaK triggers the release of the substrate protein, thus completing the reaction cycle. Several rounds of ATP-dependent interactions between DnaJ, DnaK and GrpE are required for fully efficient folding. In Buchnera aphidicola subsp. Schizaphis graminum (strain Sg), this protein is Protein GrpE 1.